The sequence spans 41 residues: Hemoglobin subunit beta (41 aa).

Positions 1-41 (LGNVLVCVLAHHFGKEFTPQVQAAYQKVVAGVANALAHKYH) constitute a Globin domain. Lys39 is modified (N6-acetyllysine).

The protein belongs to the globin family. Heterotetramer of two alpha chains and two beta chains. As to expression, red blood cells.

Functionally, involved in oxygen transport from the lung to the various peripheral tissues. The protein is Hemoglobin subunit beta (HBB) of Colobus guereza (Mantled guereza).